Here is a 52-residue protein sequence, read N- to C-terminus: Disintegrin multisquamatin (52 aa).

A Disintegrin domain is found at 1-50 (EGEECESGPCCRNCKFLKEGTICKRARGDDMDDYCNGKTCDCPRNPHKGP). 4 cysteine pairs are disulfide-bonded: cysteine 5–cysteine 14, cysteine 10–cysteine 35, cysteine 11–cysteine 40, and cysteine 23–cysteine 42. The short motif at 27-29 (RGD) is the Cell attachment site element.

The protein belongs to the venom metalloproteinase (M12B) family. P-II subfamily. P-IIa sub-subfamily. Monomer. In terms of tissue distribution, expressed by the venom gland.

It localises to the secreted. In terms of biological role, inhibits ADP-induced human, canine and rabbit platelet aggregation by binding with high affinity to alpha-IIb/beta-3 (ITGA2B/ITGB3). The chain is Disintegrin multisquamatin from Echis multisquamatus (Central Asian sand viper).